The primary structure comprises 1058 residues: Outer capsid protein VP4 (1058 aa).

It belongs to the orthoreovirus lambda-2 protein family.

The protein resides in the virion. It carries out the reaction a 5'-end diphospho-ribonucleoside in mRNA + GTP + H(+) = a 5'-end (5'-triphosphoguanosine)-ribonucleoside in mRNA + diphosphate. The catalysed reaction is a 5'-end (5'-triphosphoguanosine)-ribonucleoside in mRNA + S-adenosyl-L-methionine = a 5'-end (N(7)-methyl 5'-triphosphoguanosine)-ribonucleoside in mRNA + S-adenosyl-L-homocysteine. In terms of biological role, outer capsid protein involved in mRNA capping. Catalyzes the last 3 enzymatic activities for formation of the 5' cap structure on the viral plus-strand transcripts, namely the RNA guanylyltransferase, RNA-7N- and RNA-2'O-methyltransferase activities. In Lymantria dispar cypovirus 1 (isolate Rao) (LdCPV-1), this protein is Outer capsid protein VP4 (S4).